We begin with the raw amino-acid sequence, 130 residues long: RutC family protein slr0709 (130 aa).

This sequence belongs to the RutC family.

This Synechocystis sp. (strain ATCC 27184 / PCC 6803 / Kazusa) protein is RutC family protein slr0709.